The primary structure comprises 388 residues: MTTGLGMPQTPAPTLAPRRRTRQLMVRDVGVGSDYPISVQSMCTTKTHDVNSTLQQIAELTAAGCDIVRVACPRQEDADALAEIARHSQIPVIADIHFQPKYIFAAIDAGCAAVRVNPGNIKEFDGRVGEVAKAAAAAGIPIRIGVNAGSLDKRFMAKYGKATPEALVESALWEASLFEEHGFSDIKISVKHNDPVVMVAAYEQLAEQCDYPLHLGVTEAGPAFQGTIKSAVAFGALLSRGIGDTIRVSLSAPPVEEVKVGIQILESLNLRPRSLEIVSCPSCGRAQVDVYTLANEVSAGLDGLDVPLRVAVMGCVVNGPGEAREADLGVASGNGKGQIFVRGEVIKTVPESQIVETLIEEAMRIAAQMNSEGGPEATSSGSPVVTVS.

C280, C283, C315, and E322 together coordinate [4Fe-4S] cluster. Positions 369–388 (MNSEGGPEATSSGSPVVTVS) are disordered. Polar residues predominate over residues 377–388 (ATSSGSPVVTVS).

This sequence belongs to the IspG family. The cofactor is [4Fe-4S] cluster.

The enzyme catalyses (2E)-4-hydroxy-3-methylbut-2-enyl diphosphate + oxidized [flavodoxin] + H2O + 2 H(+) = 2-C-methyl-D-erythritol 2,4-cyclic diphosphate + reduced [flavodoxin]. Its pathway is isoprenoid biosynthesis; isopentenyl diphosphate biosynthesis via DXP pathway; isopentenyl diphosphate from 1-deoxy-D-xylulose 5-phosphate: step 5/6. Its function is as follows. Converts 2C-methyl-D-erythritol 2,4-cyclodiphosphate (ME-2,4cPP) into 1-hydroxy-2-methyl-2-(E)-butenyl 4-diphosphate. This chain is 4-hydroxy-3-methylbut-2-en-1-yl diphosphate synthase (flavodoxin), found in Mycolicibacterium paratuberculosis (strain ATCC BAA-968 / K-10) (Mycobacterium paratuberculosis).